Here is a 366-residue protein sequence, read N- to C-terminus: MTFSKQLFPFVFFLLFLVSLRHASNPNNCSSSSSRPLRCGPLEVPIRFPFCNHARFNLHCTDLNKTVLELPMSGTFLVRDIDYRRQKIYINDPNCLAKRLLTFNISGSPFSPHFDILYTFLSCPNEVVLPSWYPSIPCLSNSTSSFFATSNYSLAQSMLPSCQIVKRLHVPATSPFGETRFSSDLNNQSLLLEWALPDCRAKCLGATKKTGTIYNSNIFSCSFSFLYDSRELFINGNLSSGVLVLVISLSAVTVFVFPTCIAIRLYDSERFDSAIAAATVMQQPREVMARRGLDQSTIETFKKMELGESRRLSGTNGIVCPICLSEYASKETVRFIPECDHCFHVECIDVWLKIHGSCPLCRNSCA.

Positions 1 to 23 (MTFSKQLFPFVFFLLFLVSLRHA) are cleaved as a signal peptide. Residues 243–263 (LVLVISLSAVTVFVFPTCIAI) traverse the membrane as a helical segment. The segment at 320–362 (CPICLSEYASKETVRFIPECDHCFHVECIDVWLKIHGSCPLCR) adopts an RING-type; atypical zinc-finger fold.

It belongs to the RING-type zinc finger family. ATL subfamily.

Its subcellular location is the membrane. It carries out the reaction S-ubiquitinyl-[E2 ubiquitin-conjugating enzyme]-L-cysteine + [acceptor protein]-L-lysine = [E2 ubiquitin-conjugating enzyme]-L-cysteine + N(6)-ubiquitinyl-[acceptor protein]-L-lysine.. Its pathway is protein modification; protein ubiquitination. This chain is Putative RING-H2 finger protein ATL21C (ATL21C), found in Arabidopsis thaliana (Mouse-ear cress).